The following is a 319-amino-acid chain: MRERTVTYSPAFTLVPTRECFNRCGYCNFRADRGAAWLQPAEVRALLLPLVGSGVVEILVLSGEVHPHDPRRGEWFAMIEDICAVALELGFLPHTNCGVLSFEEMRALQQLNVSLGLMLEIDSNRLLGGVHRHAPSKIPALRTAQLEWAGALGIPFTTGLLLGIGETPAEREDTLRTIARLQDRHGHIQEVILQPHSPGGSQSWAGEPLGDAQLLGVVRLARQILPAEITIQIPPNLVGDPVPLLEAGARDLGGIGPVDVVNPDYAHPVVERLGERLAAAGWRLEPRLPVYPHLDKRVATALQPLLGEHRARLCQAAVT.

Positions 6 to 236 (VTYSPAFTLV…AEITIQIPPN (231 aa)) constitute a Radical SAM core domain. [4Fe-4S] cluster contacts are provided by Cys-20, Cys-24, and Cys-27.

This sequence belongs to the radical SAM superfamily. CofG family. In terms of assembly, consists of two subunits, CofG and CofH. Requires [4Fe-4S] cluster as cofactor.

It carries out the reaction 5-amino-5-(4-hydroxybenzyl)-6-(D-ribitylimino)-5,6-dihydrouracil + S-adenosyl-L-methionine = 7,8-didemethyl-8-hydroxy-5-deazariboflavin + 5'-deoxyadenosine + L-methionine + NH4(+) + H(+). The protein operates within cofactor biosynthesis; coenzyme F0 biosynthesis. In terms of biological role, catalyzes the radical-mediated synthesis of 7,8-didemethyl-8-hydroxy-5-deazariboflavin from 5-amino-5-(4-hydroxybenzyl)-6-(D-ribitylimino)-5,6-dihydrouracil. In Gloeobacter violaceus (strain ATCC 29082 / PCC 7421), this protein is 7,8-didemethyl-8-hydroxy-5-deazariboflavin synthase.